Consider the following 336-residue polypeptide: Potassium channel subfamily K member 1 (336 aa).

At 1–20 (MLQSLAGSSCVRLVERHRSA) the chain is on the cytoplasmic side. A helical membrane pass occupies residues 21–41 (WCFGFLVLGYLLYLVFGAVVF). The Extracellular portion of the chain corresponds to 42–103 (SSVELPYEDL…SNASGNWNWD (62 aa)). A glycan (N-linked (GlcNAc...) asparagine) is linked at Asn95. An intramembrane region (helical) is located at residues 104–116 (FTSALFFASTVLS). Residues 117 to 122 (TTGYGH) lie within the membrane without spanning it. Positions 117–122 (TTGYGH) are selectivity filter 1. The Extracellular segment spans residues 123–132 (TVPLSDGGKA). Residues 133–156 (FCIIYSVIGIPFTLLFLTAVVQRV) form a helical membrane-spanning segment. Over 157-181 (TIHVTRRPVLYFHVRWGFSKQAVAI) the chain is Cytoplasmic. Residues 182–202 (VHAVLLGVVTVSCFFFIPAAV) form a helical membrane-spanning segment. Residues 203–211 (FSVLEDDWN) lie on the Extracellular side of the membrane. Residues 212 to 224 (FLESFYFCFISLS) constitute an intramembrane region (helical). Residues 225-230 (TIGLGD) form a selectivity filter 2 region. An intramembrane segment occupies 225–231 (TIGLGDY). Residues 232–243 (VPGEGYNQKFRE) are Extracellular-facing. A helical transmembrane segment spans residues 244-267 (LYKIGITCYLLLGLIAMLVVLETF). Over 268-336 (CELHELKKFR…PALADGASDH (69 aa)) the chain is Cytoplasmic. Lys274 participates in a covalent cross-link: Glycyl lysine isopeptide (Lys-Gly) (interchain with G-Cter in SUMO). Positions 293–299 (IIEHDQL) are important for intracellular retention in recycling endosomes. The tract at residues 307-336 (QAAGVQEDQKQNEPFVSPQPPALADGASDH) is disordered.

The protein belongs to the two pore domain potassium channel (TC 1.A.1.8) family. As to quaternary structure, homodimer; disulfide-linked. Heterodimer with KCNK2; disulfide-linked. In astrocytes, forms mostly heterodimeric potassium channels with KCNK2, with only a minor proportion of functional channels containing homodimeric KCNK1. Interacts with KCNK3 and KCNK9, forming functional heterodimeric channels. Interacts with GNG4. Identified in a complex with PSD and ARF6; interacts only with PSD that is bound to ARF6. Interacts with UBE2I. Post-translationally, sumoylation is controversial. Sumoylated by UBE2I. Not sumoylated when expressed in xenopus oocytes or mammalian cells. Sumoylation inactivates the channel, but does not interfere with expression at the cell membrane. Sumoylation of a single subunit is sufficient to silence the dimeric channel. Sumoylation of KCNK1 is sufficient to silence heterodimeric channels formed by KCNK1 and KCNK3 or KCNK9. Desumoylated by SENP1; this activates the channel. Desumoylated by SENP1; this strongly increases halothane-mediated activation of heterodimeric channels formed with KCNK9. SENP1 treatment has no effect.

It is found in the cell membrane. The protein localises to the recycling endosome. It localises to the synaptic cell membrane. The protein resides in the cytoplasmic vesicle. Its subcellular location is the perikaryon. It is found in the cell projection. The protein localises to the dendrite. It localises to the apical cell membrane. The enzyme catalyses K(+)(in) = K(+)(out). It carries out the reaction NH4(+)(in) = NH4(+)(out). The catalysed reaction is Na(+)(in) = Na(+)(out). It catalyses the reaction Rb(+)(in) = Rb(+)(out). The enzyme catalyses Cs(+)(in) = Cs(+)(out). It carries out the reaction Li(+)(in) = Li(+)(out). The catalysed reaction is L-glutamate(out) = L-glutamate(in). It catalyses the reaction chloride(in) = chloride(out). Functionally, ion channel that contributes to passive transmembrane potassium transport and to the regulation of the resting membrane potential in brain astrocytes, but also in kidney and in other tissues. Forms dimeric channels through which potassium ions pass in accordance with their electrochemical gradient. The channel is selective for K(+) ions at physiological potassium concentrations and at neutral pH, but becomes permeable to Na(+) at subphysiological K(+) levels and upon acidification of the extracellular medium. The homodimer has very low potassium channel activity, when expressed in heterologous systems, and can function as weakly inward rectifying potassium channel. Channel activity is modulated by activation of serotonin receptors. Heterodimeric channels containing KCNK1 and KCNK2 have much higher activity, and may represent the predominant form in astrocytes. Heterodimeric channels containing KCNK1 and KCNK3 or KCNK9 have much higher activity. Heterodimeric channels formed by KCNK1 and KCNK9 may contribute to halothane-sensitive currents. Mediates outward rectifying potassium currents in dentate gyrus granule cells and contributes to the regulation of their resting membrane potential. Contributes to the regulation of action potential firing in dentate gyrus granule cells and down-regulates their intrinsic excitability. In astrocytes, the heterodimer formed by KCNK1 and KCNK2 is required for rapid glutamate release in response to activation of G-protein coupled receptors, such as F2R and CNR1. Required for normal ion and water transport in the kidney. Contributes to the regulation of the resting membrane potential of pancreatic beta cells. The low channel activity of homodimeric KCNK1 may be due to sumoylation. The low channel activity may be due to rapid internalization from the cell membrane and retention in recycling endosomes. Permeable to monovalent cations with ion selectivity for K(+) &gt; Rb(+) &gt;&gt; NH4(+) &gt;&gt; Cs(+) = Na(+) = Li(+). The protein is Potassium channel subfamily K member 1 of Bos taurus (Bovine).